We begin with the raw amino-acid sequence, 164 residues long: uncharacterized protein (164 aa).

A disordered region spans residues 46 to 142 (GRSPEQKEHV…APDNSIYDTL (97 aa)).

This is an uncharacterized protein from Caenorhabditis elegans.